The chain runs to 80 residues: Adipogenin (80 aa).

The helical transmembrane segment at 14 to 34 threads the bilayer; the sequence is FSFLVFWFCLPVGLLLLLIIW.

It belongs to the adipogenin family.

It localises to the membrane. The protein localises to the nucleus. Its function is as follows. Plays a role in stimulating adipocyte differentiation and development. This Homo sapiens (Human) protein is Adipogenin.